A 242-amino-acid chain; its full sequence is LexA repressor (242 aa).

Positions 26–46 (FEEMKAALNLKSKSGIHRLIS) form a DNA-binding region, H-T-H motif. Active-site for autocatalytic cleavage activity residues include S163 and K201.

The protein belongs to the peptidase S24 family. As to quaternary structure, homodimer.

It catalyses the reaction Hydrolysis of Ala-|-Gly bond in repressor LexA.. Functionally, represses a number of genes involved in the response to DNA damage (SOS response), including recA and lexA. In the presence of single-stranded DNA, RecA interacts with LexA causing an autocatalytic cleavage which disrupts the DNA-binding part of LexA, leading to derepression of the SOS regulon and eventually DNA repair. The protein is LexA repressor of Granulibacter bethesdensis (strain ATCC BAA-1260 / CGDNIH1).